The chain runs to 343 residues: Putative KilA-N domain-containing protein R904 (343 aa).

The region spanning 51 to 157 (EFSWGNYLNL…IKASVIINDY (107 aa)) is the KilA-N domain. Residues 159 to 279 (AKQMFKEHEK…NAVKEYKELY (121 aa)) are a coiled coil.

The sequence is that of Putative KilA-N domain-containing protein R904 from Acanthamoeba polyphaga mimivirus (APMV).